Reading from the N-terminus, the 329-residue chain is UDP-N-acetylenolpyruvoylglucosamine reductase (329 aa).

Residues 28–192 (RVGGPADLLC…ARVEVRLRPG (165 aa)) form the FAD-binding PCMH-type domain. The active site involves R172. Residues 204–225 (DRERRRATQPLDRPTFGSTFTN) form a disordered region. The active-site Proton donor is the S221. E291 is an active-site residue. The disordered stretch occupies residues 303 to 329 (LAGLDGHAADGGGPGAASGGARPREAT). Gly residues predominate over residues 311–320 (ADGGGPGAAS).

This sequence belongs to the MurB family. Requires FAD as cofactor.

It is found in the cytoplasm. It carries out the reaction UDP-N-acetyl-alpha-D-muramate + NADP(+) = UDP-N-acetyl-3-O-(1-carboxyvinyl)-alpha-D-glucosamine + NADPH + H(+). It functions in the pathway cell wall biogenesis; peptidoglycan biosynthesis. Functionally, cell wall formation. This Anaeromyxobacter dehalogenans (strain 2CP-C) protein is UDP-N-acetylenolpyruvoylglucosamine reductase.